Reading from the N-terminus, the 546-residue chain is EH domain-containing protein 2 (546 aa).

EF-hand domains lie at 15–50 (EHQK…SKLS) and 51–84 (RQEL…VSLA). An EH domain is found at 16-94 (HQKIYKEWFN…QEGHEITSDL (79 aa)). Ca(2+)-binding residues include Asp-28, Asp-30, Asp-32, Arg-34, Asp-39, Asp-62, and Glu-73. The region spanning 194–430 (FDAKPMVMLL…LLADLMDVPK (237 aa)) is the Dynamin-type G domain. The segment at 204 to 211 (GQYSTGKT) is G1 motif. A GTP-binding site is contributed by 204–211 (GQYSTGKT). Residues 230 to 231 (EP) form a G2 motif region. The segment at 292 to 295 (DTPG) is G3 motif. GTP contacts are provided by residues 292–296 (DTPGV) and Lys-359. A G4 motif region spans residues 358–361 (NKAD). Residue Val-382 is a region of interest, G5 motif. Residue 395–398 (SFND) coordinates GTP. The short motif at 429 to 436 (PKKACDRK) is the Nuclear localization signal element. The stretch at 467-490 (KSKAQQRLMDNLEEEFGKVQREFH) forms a coiled coil.

It belongs to the TRAFAC class dynamin-like GTPase superfamily. Dynamin/Fzo/YdjA family. EHD subfamily. Homooligomer, and heterooligomer with EHD1. Interacts with AP-4 complex subunit sigma (At2g19790).

It localises to the endosome membrane. The protein resides in the cell membrane. Its subcellular location is the nucleus. The protein localises to the cytoplasm. It carries out the reaction GTP + H2O = GDP + phosphate + H(+). In terms of biological role, involved in endocytosis negative regulation, probably by influencing actin organization. Acts in early endocytic membrane fusion and membrane trafficking of recycling endosomes. Exhibits an inhibitory effect on endocytosis when over-expressed. This Arabidopsis thaliana (Mouse-ear cress) protein is EH domain-containing protein 2.